A 364-amino-acid chain; its full sequence is Mannose-1-phosphate guanyltransferase (364 aa).

It belongs to the transferase hexapeptide repeat family.

Its subcellular location is the cytoplasm. It catalyses the reaction alpha-D-mannose 1-phosphate + GTP + H(+) = GDP-alpha-D-mannose + diphosphate. It participates in nucleotide-sugar biosynthesis; GDP-alpha-D-mannose biosynthesis; GDP-alpha-D-mannose from alpha-D-mannose 1-phosphate (GTP route): step 1/1. Its function is as follows. Involved in cell wall synthesis where it is required for glycosylation. Involved in cell cycle progression through cell-size checkpoint. The polypeptide is Mannose-1-phosphate guanyltransferase (mpg1) (Aspergillus oryzae (strain ATCC 42149 / RIB 40) (Yellow koji mold)).